The following is a 695-amino-acid chain: Biosynthetic arginine decarboxylase 1 (695 aa).

N6-(pyridoxal phosphate)lysine is present on K141. 332–342 (LDVGGGLGVDY) lines the substrate pocket.

The protein belongs to the Orn/Lys/Arg decarboxylase class-II family. SpeA subfamily. Mg(2+) is required as a cofactor. Pyridoxal 5'-phosphate serves as cofactor.

The enzyme catalyses L-arginine + H(+) = agmatine + CO2. Its function is as follows. Catalyzes the biosynthesis of agmatine from arginine. This is Biosynthetic arginine decarboxylase 1 (speA1) from Synechocystis sp. (strain ATCC 27184 / PCC 6803 / Kazusa).